We begin with the raw amino-acid sequence, 174 residues long: Extracellular cysteine protease (174 aa).

Residues cysteine 24, histidine 120, and asparagine 141 contribute to the active site.

Belongs to the peptidase C47 family. In terms of processing, proteolytically cleaved.

It is found in the secreted. Its subcellular location is the cell wall. With respect to regulation, inhibited by heavy metal ions such as Zn(2+) or Ni(2+), iodoacetamide, N-ethylmaleimide, leupeptin, SDS and E-64. Also inhibited by chloromethylketones TPCK and TLCK and by human plasma inhibitor alpha-2-macroglobulin. Stimulated by L-cysteine. Cysteine protease able to cleave elastin, insulin, myoglobin, fibronectin, fibrinogen, HMW-kininogen, alpha-1-protease inhibitor and alpha-1-antitrypsin. Along with other extracellular proteases may contribute to the colonization and infection of human tissues. The polypeptide is Extracellular cysteine protease (ecpA) (Staphylococcus epidermidis).